The primary structure comprises 150 residues: MEKKIAVTAGTFDLLHPGHFNTLNFAKKHADELVVIIARDETVKKIKGRSPVIPEEQRKIMIEALKPVDRAVLGSLTNKLEPILEIRPDIIVLGPDQTTYQITELKSQLAKHFLYPEVLKVEEYVRCPFHSSFDILKEIVRRWCCKELKV.

ATP contacts are provided by residues 11 to 12 (TF), 16 to 19 (HPGH), aspartate 96, and tyrosine 124.

The protein belongs to the archaeal FAD synthase family. Homodimer. A divalent metal cation serves as cofactor.

The catalysed reaction is FMN + ATP + H(+) = FAD + diphosphate. It functions in the pathway cofactor biosynthesis; FAD biosynthesis; FAD from FMN: step 1/1. Functionally, catalyzes the transfer of the AMP portion of ATP to flavin mononucleotide (FMN) to produce flavin adenine dinucleotide (FAD) coenzyme. In Methanococcus maripaludis (strain C7 / ATCC BAA-1331), this protein is FAD synthase.